We begin with the raw amino-acid sequence, 429 residues long: Serum response factor-binding protein 1 (429 aa).

Ala2 carries the post-translational modification N-acetylalanine. Coiled coils occupy residues 42 to 67 (KGTE…AMKE) and 108 to 144 (LLKK…EDNH). Composition is skewed to polar residues over residues 128–138 (QNVTEVESSKN) and 146–160 (KNTL…NLQR). 2 disordered regions span residues 128–285 (QNVT…GDDF) and 311–429 (EKVF…TFDD). Residues 183–195 (NSKEKIAKMEHGP) show a composition bias toward basic and acidic residues. Residue Lys190 forms a Glycyl lysine isopeptide (Lys-Gly) (interchain with G-Cter in SUMO2) linkage. A phosphoserine mark is found at Ser203, Ser205, Ser264, Ser279, and Ser281. Positions 249–265 (GGEELCEEEKEYFDDST) are enriched in acidic residues. Residues 311–341 (EKVFLKEDTGETHGDTRNDKTKPSTETRKLE) show a composition bias toward basic and acidic residues. Lys316 is covalently cross-linked (Glycyl lysine isopeptide (Lys-Gly) (interchain with G-Cter in SUMO2)). Phosphoserine is present on residues Ser349, Ser351, and Ser367. Positions 357 to 367 (NFKEQAPKTRS) are enriched in basic and acidic residues. A compositionally biased stretch (polar residues) spans 373 to 383 (NEPQFKNQFNK).

In terms of assembly, interacts with SRF. Forms complexes with SRF and SRF cofactors ARID2, MYOCD and NKX2-5. Interacts with the N-terminus of SLC2A4.

The protein resides in the cytoplasm. Its subcellular location is the perinuclear region. In terms of biological role, may be involved in regulating transcriptional activation of cardiac genes during the aging process. May play a role in biosynthesis and/or processing of SLC2A4 in adipose cells. This chain is Serum response factor-binding protein 1, found in Pongo abelii (Sumatran orangutan).